We begin with the raw amino-acid sequence, 313 residues long: Aspartoacylase (313 aa).

The Zn(2+) site is built by H21 and E24. N-acetyl-L-aspartate is bound by residues R63, N70, and R71. Residue H116 coordinates Zn(2+). N-acetyl-L-aspartate contacts are provided by Y164 and R168. E178 acts as the Proton donor/acceptor in catalysis. Y288 contributes to the N-acetyl-L-aspartate binding site.

This sequence belongs to the AspA/AstE family. Aspartoacylase subfamily. As to quaternary structure, homodimer. It depends on Zn(2+) as a cofactor.

It is found in the cytoplasm. It localises to the nucleus. The enzyme catalyses an N-acyl-L-aspartate + H2O = a carboxylate + L-aspartate. It catalyses the reaction N-acetyl-L-aspartate + H2O = L-aspartate + acetate. Functionally, catalyzes the deacetylation of N-acetylaspartic acid (NAA) to produce acetate and L-aspartate. NAA occurs in high concentration in brain and its hydrolysis NAA plays a significant part in the maintenance of intact white matter. In other tissues it acts as a scavenger of NAA from body fluids. The polypeptide is Aspartoacylase (ASPA) (Bos taurus (Bovine)).